The chain runs to 2157 residues: Conidial yellow pigment biosynthesis polyketide synthase (2157 aa).

The interval 8–244 (YLFGDQTGDF…VMVPIHGPFH (237 aa)) is N-terminal acylcarrier protein transacylase domain (SAT). The Ketosynthase family 3 (KS3) domain maps to 376 to 807 (LSKIAIIGMS…GGNTALLLED (432 aa)). Active-site for beta-ketoacyl synthase activity residues include cysteine 548, histidine 683, and histidine 725. A malonyl-CoA:ACP transacylase (MAT) domain region spans residues 912–1232 (FLFTGQGAQY…LSSLYLAGVD (321 aa)). Catalysis depends on serine 1001, which acts as the For acyl/malonyl transferase activity. Residues 1290–1603 (TTSAQRVVES…RKILDIALPP (314 aa)) are product template (PT) domain. The tract at residues 1294–1425 (QRVVESRDDG…CEVKLFDCMA (132 aa)) is N-terminal hotdog fold. The 305-residue stretch at 1294-1598 (QRVVESRDDG…FQALSRKILD (305 aa)) folds into the PKS/mFAS DH domain. The Proton acceptor; for dehydratase activity role is filled by histidine 1326. Residues 1453-1598 (AHRLRRGMVY…FQALSRKILD (146 aa)) form a C-terminal hotdog fold region. Aspartate 1511 acts as the Proton donor; for dehydratase activity in catalysis. The disordered stretch occupies residues 1607-1638 (SKAQTSPIQSSAPQKPIETAKPTSRPAPPVTM). The span at 1608 to 1619 (KAQTSPIQSSAP) shows a compositional bias: polar residues. Residues 1645–1722 (SAGPSVVVRA…DFKRFVTQLS (78 aa)) enclose the Carrier 1 domain. Serine 1682 bears the O-(pantetheine 4'-phosphoryl)serine mark. Positions 1725–1760 (VASDSSSTDRESEYSFNGDSCSGLSSPASPGTVSPP) are disordered. The span at 1741–1759 (NGDSCSGLSSPASPGTVSP) shows a compositional bias: polar residues. Residues 1767–1844 (IHENGTMKEI…QIETALDLKP (78 aa)) enclose the Carrier 2 domain. Serine 1804 bears the O-(pantetheine 4'-phosphoryl)serine mark. Positions 1847 to 1888 (VPTAVPQSQPITLPQSQSTKQLSTRPTSSSDNHPPATSILLQ) are disordered. The span at 1851–1878 (VPQSQPITLPQSQSTKQLSTRPTSSSDN) shows a compositional bias: polar residues. The interval 1877–2149 (DNHPPATSIL…ELATFMKNAL (273 aa)) is claisen cyclase domain. Serine 1967 (for thioesterase activity) is an active-site residue.

Pantetheine 4'-phosphate is required as a cofactor.

The catalysed reaction is 6 malonyl-CoA + acetyl-CoA + 6 H(+) = naphtopyrone YWA1 + 6 CO2 + 7 CoA + H2O. Its pathway is polyketide biosynthesis; heptaketide naphthopyrone YWA1 biosynthesis. Its function is as follows. Non-reducing polyketide synthase that condenses acetate units to form a heptaketide naphthopyrene YWA1, a yellow pigment found in mature asexual spores (conidia), via a polyketomethylene intermediate step. This Emericella nidulans (strain FGSC A4 / ATCC 38163 / CBS 112.46 / NRRL 194 / M139) (Aspergillus nidulans) protein is Conidial yellow pigment biosynthesis polyketide synthase.